The sequence spans 91 residues: Sec-independent protein translocase protein TatAt (91 aa).

The helical transmembrane segment at 9–29 threads the bilayer; it reads FPGLPGGPELLVVLLIVVLLF. A disordered region spans residues 48 to 91; that stretch reads FQRGREEIEDELQDMTGDDDEDDATSESSADSVSTDSVSTESSN. Residues 54–72 show a composition bias toward acidic residues; sequence EIEDELQDMTGDDDEDDAT. A compositionally biased stretch (low complexity) spans 73–91; the sequence is SESSADSVSTDSVSTESSN.

The protein belongs to the TatA/E family. Forms a complex with TatC. Cytoplasmic and membrane-bound TatA form high-molecular-weight complexes.

The protein resides in the cell membrane. It localises to the cytoplasm. In terms of biological role, part of the twin-arginine translocation (Tat) system that transports large folded proteins containing a characteristic twin-arginine motif in their signal peptide across membranes. TatA could form the protein-conducting channel of the Tat system. The protein is Sec-independent protein translocase protein TatAt of Haloferax volcanii (strain ATCC 29605 / DSM 3757 / JCM 8879 / NBRC 14742 / NCIMB 2012 / VKM B-1768 / DS2) (Halobacterium volcanii).